A 438-amino-acid polypeptide reads, in one-letter code: Trigger factor (438 aa).

A PPIase FKBP-type domain is found at 160–245; it reads DDKVTIDFVG…VKKIQQAELP (86 aa).

This sequence belongs to the FKBP-type PPIase family. Tig subfamily.

It localises to the cytoplasm. It catalyses the reaction [protein]-peptidylproline (omega=180) = [protein]-peptidylproline (omega=0). Involved in protein export. Acts as a chaperone by maintaining the newly synthesized protein in an open conformation. Functions as a peptidyl-prolyl cis-trans isomerase. The sequence is that of Trigger factor from Francisella tularensis subsp. holarctica (strain OSU18).